Consider the following 399-residue polypeptide: Tryptophan synthase beta chain (399 aa).

Residue Lys92 is modified to N6-(pyridoxal phosphate)lysine.

This sequence belongs to the TrpB family. In terms of assembly, tetramer of two alpha and two beta chains. Pyridoxal 5'-phosphate serves as cofactor.

The catalysed reaction is (1S,2R)-1-C-(indol-3-yl)glycerol 3-phosphate + L-serine = D-glyceraldehyde 3-phosphate + L-tryptophan + H2O. Its pathway is amino-acid biosynthesis; L-tryptophan biosynthesis; L-tryptophan from chorismate: step 5/5. In terms of biological role, the beta subunit is responsible for the synthesis of L-tryptophan from indole and L-serine. This is Tryptophan synthase beta chain from Nitrosomonas eutropha (strain DSM 101675 / C91 / Nm57).